The chain runs to 488 residues: Malonate-semialdehyde dehydrogenase 1 (488 aa).

6 residues coordinate NAD(+): Phe-156, Lys-180, Glu-183, Arg-184, Ser-233, and Ser-255. Cys-288 functions as the Nucleophile in the catalytic mechanism. NAD(+) is bound at residue Glu-387.

It belongs to the aldehyde dehydrogenase family. IolA subfamily. Homotetramer.

It catalyses the reaction 3-oxopropanoate + NAD(+) + CoA + H2O = hydrogencarbonate + acetyl-CoA + NADH + H(+). The catalysed reaction is 2-methyl-3-oxopropanoate + NAD(+) + CoA + H2O = propanoyl-CoA + hydrogencarbonate + NADH + H(+). It participates in polyol metabolism; myo-inositol degradation into acetyl-CoA; acetyl-CoA from myo-inositol: step 7/7. Catalyzes the oxidation of malonate semialdehyde (MSA) and methylmalonate semialdehyde (MMSA) into acetyl-CoA and propanoyl-CoA, respectively. Is involved in a myo-inositol catabolic pathway. Bicarbonate, and not CO2, is the end-product of the enzymatic reaction. The chain is Malonate-semialdehyde dehydrogenase 1 from Geobacillus kaustophilus (strain HTA426).